Here is a 121-residue protein sequence, read N- to C-terminus: Phosphoribosyl-ATP pyrophosphatase (121 aa).

The protein belongs to the PRA-PH family.

It localises to the cytoplasm. The catalysed reaction is 1-(5-phospho-beta-D-ribosyl)-ATP + H2O = 1-(5-phospho-beta-D-ribosyl)-5'-AMP + diphosphate + H(+). It functions in the pathway amino-acid biosynthesis; L-histidine biosynthesis; L-histidine from 5-phospho-alpha-D-ribose 1-diphosphate: step 2/9. In Nitrosospira multiformis (strain ATCC 25196 / NCIMB 11849 / C 71), this protein is Phosphoribosyl-ATP pyrophosphatase.